Reading from the N-terminus, the 332-residue chain is Holliday junction branch migration complex subunit RuvB (332 aa).

Positions Met-1–Tyr-181 are large ATPase domain (RuvB-L). ATP-binding positions include Leu-20, Arg-21, Gly-62, Lys-65, Thr-66, Thr-67, Glu-128–Phe-130, Arg-171, Tyr-181, and Arg-218. Mg(2+) is bound at residue Thr-66. The interval Gln-182 to Asp-252 is small ATPAse domain (RuvB-S). A head domain (RuvB-H) region spans residues Arg-255–Thr-332. DNA-binding residues include Arg-291, Arg-310, Arg-312, and Arg-315.

Belongs to the RuvB family. In terms of assembly, homohexamer. Forms an RuvA(8)-RuvB(12)-Holliday junction (HJ) complex. HJ DNA is sandwiched between 2 RuvA tetramers; dsDNA enters through RuvA and exits via RuvB. An RuvB hexamer assembles on each DNA strand where it exits the tetramer. Each RuvB hexamer is contacted by two RuvA subunits (via domain III) on 2 adjacent RuvB subunits; this complex drives branch migration. In the full resolvosome a probable DNA-RuvA(4)-RuvB(12)-RuvC(2) complex forms which resolves the HJ.

It is found in the cytoplasm. It carries out the reaction ATP + H2O = ADP + phosphate + H(+). Functionally, the RuvA-RuvB-RuvC complex processes Holliday junction (HJ) DNA during genetic recombination and DNA repair, while the RuvA-RuvB complex plays an important role in the rescue of blocked DNA replication forks via replication fork reversal (RFR). RuvA specifically binds to HJ cruciform DNA, conferring on it an open structure. The RuvB hexamer acts as an ATP-dependent pump, pulling dsDNA into and through the RuvAB complex. RuvB forms 2 homohexamers on either side of HJ DNA bound by 1 or 2 RuvA tetramers; 4 subunits per hexamer contact DNA at a time. Coordinated motions by a converter formed by DNA-disengaged RuvB subunits stimulates ATP hydrolysis and nucleotide exchange. Immobilization of the converter enables RuvB to convert the ATP-contained energy into a lever motion, pulling 2 nucleotides of DNA out of the RuvA tetramer per ATP hydrolyzed, thus driving DNA branch migration. The RuvB motors rotate together with the DNA substrate, which together with the progressing nucleotide cycle form the mechanistic basis for DNA recombination by continuous HJ branch migration. Branch migration allows RuvC to scan DNA until it finds its consensus sequence, where it cleaves and resolves cruciform DNA. This chain is Holliday junction branch migration complex subunit RuvB, found in Streptococcus pyogenes serotype M18 (strain MGAS8232).